The chain runs to 280 residues: P32 adhesin (280 aa).

2 consecutive transmembrane segments (helical) span residues 13 to 37 (FIVL…ALVV) and 68 to 92 (WFIP…AIGL). Over residues 114-128 (EQLQRISDQQEQQTV) the composition is skewed to polar residues. Disordered stretches follow at residues 114–149 (EQLQ…QPLQ) and 163–280 (FNPN…GLKP). 2 stretches are compositionally biased toward low complexity: residues 132–149 (PQQS…QPLQ) and 168–188 (QQRP…NFNP). 13 consecutive repeat copies span residues 163–168 (FNPNMQ), 170–174 (RPGFN), 186–190 (FNPRM), 191–195 (NPNMQ), 196–200 (RPGFN), 199–204 (FNPNMQ), 206–210 (RPGFN), 222–226 (FNPRM), 227–231 (NPNMQ), 232–236 (RPGFN), 249–254 (FNPNMQ), 256–260 (RPGFN), and 259–264 (FNPNMQ). Residues 163 to 264 (FNPNMQQRPG…QRPGFNPNMQ (102 aa)) are 6 X 5 AA repeats of [FM]-N-P-N-M-Q. The interval 170 to 260 (RPGFNQPNQQ…PNMQQRPGFN (91 aa)) is 5 X 5 AA repeats of R-P-G-F-N. The 2 X 5 AA repeats of F-N-P-R-M stretch occupies residues 186 to 226 (FNPRMNPNMQRPGFNPNMQQRPGFNQPNQQFQPHNNFNPRM). Residues 204 to 224 (QQRPGFNQPNQQFQPHNNFNP) show a composition bias toward low complexity. Over residues 235 to 257 (FNQPHPNQFAQPNNFNPNMQQRP) the composition is skewed to low complexity. Residues 261–271 (PNMQQRPNPSQ) are compositionally biased toward polar residues.

The protein localises to the cell projection. The protein resides in the attachment organelle membrane. Its function is as follows. Adhesin necessary for successful cytadherence and virulence. This Mycoplasma genitalium (strain ATCC 33530 / DSM 19775 / NCTC 10195 / G37) (Mycoplasmoides genitalium) protein is P32 adhesin.